Reading from the N-terminus, the 248-residue chain is Protein GrpE (248 aa).

The segment at 229 to 248 (AAPKEDTLPAQENQSSPADS) is disordered. A compositionally biased stretch (polar residues) spans 238-248 (AQENQSSPADS).

It belongs to the GrpE family. As to quaternary structure, homodimer.

The protein resides in the cytoplasm. Participates actively in the response to hyperosmotic and heat shock by preventing the aggregation of stress-denatured proteins, in association with DnaK and GrpE. It is the nucleotide exchange factor for DnaK and may function as a thermosensor. Unfolded proteins bind initially to DnaJ; upon interaction with the DnaJ-bound protein, DnaK hydrolyzes its bound ATP, resulting in the formation of a stable complex. GrpE releases ADP from DnaK; ATP binding to DnaK triggers the release of the substrate protein, thus completing the reaction cycle. Several rounds of ATP-dependent interactions between DnaJ, DnaK and GrpE are required for fully efficient folding. The sequence is that of Protein GrpE from Nostoc sp. (strain PCC 7120 / SAG 25.82 / UTEX 2576).